We begin with the raw amino-acid sequence, 82 residues long: Small ribosomal subunit protein bS16 (82 aa).

The protein belongs to the bacterial ribosomal protein bS16 family.

The polypeptide is Small ribosomal subunit protein bS16 (Francisella philomiragia subsp. philomiragia (strain ATCC 25017 / CCUG 19701 / FSC 153 / O#319-036)).